A 466-amino-acid chain; its full sequence is Ribulose bisphosphate carboxylase large chain (466 aa).

K5 carries the post-translational modification N6,N6,N6-trimethyllysine. The substrate site is built by N114 and T164. K166 (proton acceptor) is an active-site residue. K168 contacts substrate. Mg(2+) contacts are provided by K192, D194, and E195. The residue at position 192 (K192) is an N6-carboxylysine. H285 serves as the catalytic Proton acceptor. Substrate-binding residues include R286, H318, and S370.

It belongs to the RuBisCO large chain family. Type I subfamily. Heterohexadecamer of 8 large chains and 8 small chains; disulfide-linked. The disulfide link is formed within the large subunit homodimers. Mg(2+) is required as a cofactor. The disulfide bond which can form in the large chain dimeric partners within the hexadecamer appears to be associated with oxidative stress and protein turnover.

Its subcellular location is the plastid. The protein resides in the chloroplast. The enzyme catalyses 2 (2R)-3-phosphoglycerate + 2 H(+) = D-ribulose 1,5-bisphosphate + CO2 + H2O. It catalyses the reaction D-ribulose 1,5-bisphosphate + O2 = 2-phosphoglycolate + (2R)-3-phosphoglycerate + 2 H(+). In terms of biological role, ruBisCO catalyzes two reactions: the carboxylation of D-ribulose 1,5-bisphosphate, the primary event in carbon dioxide fixation, as well as the oxidative fragmentation of the pentose substrate in the photorespiration process. Both reactions occur simultaneously and in competition at the same active site. The chain is Ribulose bisphosphate carboxylase large chain from Asarum canadense (Wild ginger).